Reading from the N-terminus, the 29-residue chain is Cyclotide mden-B (29 aa).

Residues 1–29 (GLPICGETCFTGKCYTPGCTCSYPICKKN) constitute a cross-link (cyclopeptide (Gly-Asn)). 3 cysteine pairs are disulfide-bonded: Cys-5–Cys-19, Cys-9–Cys-21, and Cys-14–Cys-26.

Belongs to the cyclotide family. Moebius subfamily. In terms of processing, this is a cyclic peptide.

In terms of biological role, probably participates in a plant defense mechanism. The sequence is that of Cyclotide mden-B from Melicytus dentatus (Tree violet).